Reading from the N-terminus, the 1916-residue chain is Diacylglycerol kinase eta (1916 aa).

Residues 1–36 (MAHIKLDTLDVVQRPGTTRRSNSNSGRSSACSSGSL) are disordered. Residues 19–36 (RRSNSNSGRSSACSSGSL) show a composition bias toward low complexity. One can recognise a PH domain in the interval 82–175 (AIIKEGFLLK…WLGSLKTATT (94 aa)). 2 consecutive Phorbol-ester/DAG-type zinc fingers follow at residues 195 to 245 (HHHW…IANC) and 268 to 319 (PHQW…AVAC). The 137-residue stretch at 350 to 486 (GNFSPLLVFV…DRWSIMVFEK (137 aa)) folds into the DAGKc domain. A compositionally biased stretch (basic and acidic residues) spans 623–644 (DEINTKERRSSRSLRSSEKEAL). Disordered regions lie at residues 623–648 (DEIN…QSRA), 846–874 (DRGK…KEDN), 1018–1067 (TLCS…DDNP), and 1183–1214 (TSTS…SVKP). The 64-residue stretch at 1853-1916 (WSVNEVVTWL…LQAIKDLSEN (64 aa)) folds into the SAM domain.

This sequence belongs to the eukaryotic diacylglycerol kinase family.

Its subcellular location is the cytoplasm. It carries out the reaction a 1,2-diacyl-sn-glycerol + ATP = a 1,2-diacyl-sn-glycero-3-phosphate + ADP + H(+). In terms of biological role, phosphorylates diacylglycerol (DAG) to generate phosphatidic acid (PA). The chain is Diacylglycerol kinase eta from Drosophila ananassae (Fruit fly).